We begin with the raw amino-acid sequence, 226 residues long: Glycerol-3-phosphate acyltransferase (226 aa).

The next 6 helical transmembrane spans lie at 1-21, 56-76, 102-122, 134-154, 159-178, and 182-197; these read MGLW…LGSF, GPGA…IALV, LVTL…FLGF, ILLA…AVVV, IVSL…MVVL, and LPYI…YVIL.

It belongs to the PlsY family. In terms of assembly, probably interacts with PlsX.

Its subcellular location is the cell inner membrane. The catalysed reaction is an acyl phosphate + sn-glycerol 3-phosphate = a 1-acyl-sn-glycero-3-phosphate + phosphate. It participates in lipid metabolism; phospholipid metabolism. In terms of biological role, catalyzes the transfer of an acyl group from acyl-phosphate (acyl-PO(4)) to glycerol-3-phosphate (G3P) to form lysophosphatidic acid (LPA). This enzyme utilizes acyl-phosphate as fatty acyl donor, but not acyl-CoA or acyl-ACP. In Trichormus variabilis (strain ATCC 29413 / PCC 7937) (Anabaena variabilis), this protein is Glycerol-3-phosphate acyltransferase.